Consider the following 133-residue polypeptide: uncharacterized protein (133 aa).

A run of 2 helical transmembrane segments spans residues 13 to 33 and 73 to 93; these read FLLS…LFLS and FGNP…LLLL.

It is found in the membrane. This is an uncharacterized protein from Saccharomyces cerevisiae (strain ATCC 204508 / S288c) (Baker's yeast).